Reading from the N-terminus, the 435-residue chain is Dual specificity protein kinase FUZ7 (435 aa).

The segment at 1–61 (MLSSGAGSSI…TIGKSSAVTP (61 aa)) is disordered. Residues 46–59 (AASNASTIGKSSAV) are compositionally biased toward polar residues. Residues 109 to 417 (LKTLSELGAG…PKDLTKHQYV (309 aa)) enclose the Protein kinase domain. ATP-binding positions include 115–123 (LGAGNGGTV) and Lys138. Catalysis depends on Asp231, which acts as the Proton acceptor. The disordered stretch occupies residues 307–359 (NEEDDDSDADNNYTNEDLAGTLSPTKPAPMISLGQNEKQRRRKSKPAGVSLEG).

It belongs to the protein kinase superfamily. STE Ser/Thr protein kinase family. MAP kinase kinase subfamily.

It carries out the reaction L-seryl-[protein] + ATP = O-phospho-L-seryl-[protein] + ADP + H(+). It catalyses the reaction L-threonyl-[protein] + ATP = O-phospho-L-threonyl-[protein] + ADP + H(+). The catalysed reaction is L-tyrosyl-[protein] + ATP = O-phospho-L-tyrosyl-[protein] + ADP + H(+). Protein kinase that is necessary for a-locus-dependent processes, such as conjugation tube formation, filament formation, and maintenance of filamentous growth, and for a-locus-independent processes, such as tumor induction and teliospore germination. This chain is Dual specificity protein kinase FUZ7 (FUZ7), found in Mycosarcoma maydis (Corn smut fungus).